A 366-amino-acid chain; its full sequence is Inhibin alpha chain (366 aa).

The N-terminal stretch at 1-18 is a signal peptide; that stretch reads MVLHLLLFLLLTPQGGHS. Residues 19–61 constitute a propeptide that is removed on maturation; that stretch reads CQGLELARELVLAKVRALFLDALGPPAVTREGGDPGVRRLPRR. Positions 62–232 are cleaved as a propeptide — inhibin alpha N-terminal region; the sequence is HALGGFTHRG…PPSGGERARR (171 aa). N-linked (GlcNAc...) asparagine glycans are attached at residues N146 and N268. Disulfide bonds link C262–C328, C291–C363, and C295–C365. A glycan (N-linked (GlcNAc...) asparagine; partial) is linked at N302.

Belongs to the TGF-beta family. In terms of assembly, dimeric, linked by one or more disulfide bonds. Activin B is a dimer of alpha and beta-B. Inhibin A is a dimer of alpha and beta-A. Inhibin B is a dimer of alpha and beta-B. Interacts with TGFBR3L; this interaction regulates female fertility. Proteolytic processing yields a number of bioactive forms. The 20/23 kDa forms consist solely of the mature alpha chain, the 26/29 kDa forms consist of the most N-terminal propeptide linked through a disulfide bond to the mature alpha chain, the 50/53 kDa forms encompass the entire proprotein. Each type can be furthermore either mono- or diglycosylated, causing the mass difference. Originally found in ovary (granulosa cells) and testis (Sertoli cells), but widely distributed in many tissues including brain and placenta. In adrenal cortex expression is limited to the zona reticularis and the innermost zona fasciculata in the normal gland, extending centripetally into the zona fasciculata in hyperplasia. Also found in adrenocortical tumors. Also expressed in prostate epithelium of benign prostatic hyperplasia, in regions of basal cell hyperplasia and in nonmalignant regions of high grade prostate cancer. Only circulating inhibin B is found in male, whereas circulating inhibins A and B are found in female.

It is found in the secreted. Functionally, inhibins and activins inhibit and activate, respectively, the secretion of follitropin by the pituitary gland. Inhibins/activins are involved in regulating a number of diverse functions such as hypothalamic and pituitary hormone secretion, gonadal hormone secretion, germ cell development and maturation, erythroid differentiation, insulin secretion, nerve cell survival, embryonic axial development or bone growth, depending on their subunit composition. Inhibins appear to oppose the functions of activins. In terms of biological role, inhibin A is a dimer of alpha/INHA and beta-A/INHBA that functions as a feedback regulator in the hypothalamic-pituitary-gonadal (HPG) axis. Inhibits the secretion of FSH from the anterior pituitary gland by acting on pituitary gonadotrope cells. Antagonizes activin A by binding to the proteoglycan, betaglycan, and forming a stable complex with and, thereby, sequestering type II activin receptors while excluding type I receptor. Inhibin B is a dimer of alpha and beta-B that plays a crucial role in the regulation of the reproductive system by inhibiting the secretion of follicle-stimulating hormone (FSH) from the anterior pituitary gland. Thereby, maintains reproductive homeostasis in both males and females. Acts as a more potent suppressor of FSH release than inhibin A. Functions as competitive receptor antagonist binding activin type II receptors with high affinity in the presence of the TGF-beta type III coreceptor/TGFBR3L. This Homo sapiens (Human) protein is Inhibin alpha chain (INHA).